Consider the following 146-residue polypeptide: 3-dehydroquinate dehydratase (146 aa).

The active-site Proton acceptor is Tyr23. Positions 74, 80, and 87 each coordinate substrate. Catalysis depends on His100, which acts as the Proton donor. Substrate-binding positions include 101–102 (IS) and Arg111.

The protein belongs to the type-II 3-dehydroquinase family. In terms of assembly, homododecamer.

It carries out the reaction 3-dehydroquinate = 3-dehydroshikimate + H2O. It participates in metabolic intermediate biosynthesis; chorismate biosynthesis; chorismate from D-erythrose 4-phosphate and phosphoenolpyruvate: step 3/7. Catalyzes a trans-dehydration via an enolate intermediate. The protein is 3-dehydroquinate dehydratase of Bacillus cereus (strain G9842).